We begin with the raw amino-acid sequence, 189 residues long: Protein GrpE (189 aa).

A compositionally biased stretch (basic residues) spans 1 to 12; the sequence is MDKKKHGSHAGA. A disordered region spans residues 1–36; the sequence is MDKKKHGSHAGAHHTDEPAAETVAPAAEGAPAAADR. Low complexity predominate over residues 20–34; it reads AETVAPAAEGAPAAA.

The protein belongs to the GrpE family. As to quaternary structure, homodimer.

It localises to the cytoplasm. Functionally, participates actively in the response to hyperosmotic and heat shock by preventing the aggregation of stress-denatured proteins, in association with DnaK and GrpE. It is the nucleotide exchange factor for DnaK and may function as a thermosensor. Unfolded proteins bind initially to DnaJ; upon interaction with the DnaJ-bound protein, DnaK hydrolyzes its bound ATP, resulting in the formation of a stable complex. GrpE releases ADP from DnaK; ATP binding to DnaK triggers the release of the substrate protein, thus completing the reaction cycle. Several rounds of ATP-dependent interactions between DnaJ, DnaK and GrpE are required for fully efficient folding. In Geobacter metallireducens (strain ATCC 53774 / DSM 7210 / GS-15), this protein is Protein GrpE.